The following is a 278-amino-acid chain: Large ribosomal subunit protein uL2 (278 aa).

2 disordered regions span residues 32-57 (ALTE…IGGG) and 221-278 (RGVA…KKKR). Over residues 269–278 (IRSRHAKKKR) the composition is skewed to basic residues.

Belongs to the universal ribosomal protein uL2 family. Part of the 50S ribosomal subunit. Forms a bridge to the 30S subunit in the 70S ribosome.

Functionally, one of the primary rRNA binding proteins. Required for association of the 30S and 50S subunits to form the 70S ribosome, for tRNA binding and peptide bond formation. It has been suggested to have peptidyltransferase activity; this is somewhat controversial. Makes several contacts with the 16S rRNA in the 70S ribosome. This is Large ribosomal subunit protein uL2 from Zymomonas mobilis subsp. mobilis (strain ATCC 31821 / ZM4 / CP4).